Here is a 363-residue protein sequence, read N- to C-terminus: Pyrimidine monooxygenase RutA (363 aa).

Residues Ile-49–Lys-50, Asn-115, Glu-124, Arg-140–Tyr-141, and Ser-190 each bind FMN.

It belongs to the NtaA/SnaA/DszA monooxygenase family. RutA subfamily.

The catalysed reaction is uracil + FMNH2 + NADH + O2 = (Z)-3-ureidoacrylate + FMN + NAD(+) + H2O + H(+). It carries out the reaction thymine + FMNH2 + NADH + O2 = (Z)-2-methylureidoacrylate + FMN + NAD(+) + H2O + H(+). In terms of biological role, catalyzes the pyrimidine ring opening between N-3 and C-4 by an unusual flavin hydroperoxide-catalyzed mechanism, adding oxygen atoms in the process to yield ureidoacrylate peracid, that immediately reacts with FMN forming ureidoacrylate and FMN-N(5)-oxide. The FMN-N(5)-oxide reacts spontaneously with NADH to produce FMN. Requires the flavin reductase RutF to regenerate FMN in vivo. This Klebsiella pneumoniae subsp. pneumoniae (strain ATCC 700721 / MGH 78578) protein is Pyrimidine monooxygenase RutA.